The chain runs to 454 residues: Tubulin alpha chain (454 aa).

Residues glutamine 12, aspartate 72, serine 141, glycine 145, threonine 146, threonine 180, asparagine 207, and asparagine 229 each coordinate GTP. Mg(2+) is bound at residue aspartate 72. Residue glutamate 255 is part of the active site.

The protein belongs to the tubulin family. Dimer of alpha and beta chains. A typical microtubule is a hollow water-filled tube with an outer diameter of 25 nm and an inner diameter of 15 nM. Alpha-beta heterodimers associate head-to-tail to form protofilaments running lengthwise along the microtubule wall with the beta-tubulin subunit facing the microtubule plus end conferring a structural polarity. Microtubules usually have 13 protofilaments but different protofilament numbers can be found in some organisms and specialized cells. It depends on Mg(2+) as a cofactor.

It is found in the cytoplasm. The protein resides in the cytoskeleton. It carries out the reaction GTP + H2O = GDP + phosphate + H(+). In terms of biological role, tubulin is the major constituent of microtubules, a cylinder consisting of laterally associated linear protofilaments composed of alpha- and beta-tubulin heterodimers. Microtubules grow by the addition of GTP-tubulin dimers to the microtubule end, where a stabilizing cap forms. Below the cap, tubulin dimers are in GDP-bound state, owing to GTPase activity of alpha-tubulin. The sequence is that of Tubulin alpha chain (TUB1) from Colletotrichum orbiculare (strain 104-T / ATCC 96160 / CBS 514.97 / LARS 414 / MAFF 240422) (Cucumber anthracnose fungus).